A 612-amino-acid chain; its full sequence is Threonine--tRNA ligase (612 aa).

Residues 218–509 are catalytic; it reads DHRKLGVELG…LSEHFGGNFP (292 aa). 3 residues coordinate Zn(2+): cysteine 310, histidine 361, and histidine 486.

The protein belongs to the class-II aminoacyl-tRNA synthetase family. Homodimer. The cofactor is Zn(2+).

The protein resides in the cytoplasm. The enzyme catalyses tRNA(Thr) + L-threonine + ATP = L-threonyl-tRNA(Thr) + AMP + diphosphate + H(+). Catalyzes the attachment of threonine to tRNA(Thr) in a two-step reaction: L-threonine is first activated by ATP to form Thr-AMP and then transferred to the acceptor end of tRNA(Thr). Also edits incorrectly charged L-seryl-tRNA(Thr). The sequence is that of Threonine--tRNA ligase from Helicobacter pylori (strain G27).